We begin with the raw amino-acid sequence, 200 residues long: Recombination protein RecR (200 aa).

The C4-type zinc-finger motif lies at 57-72 (CERCRNYAQSTLCPVC). In terms of domain architecture, Toprim spans 80–175 (SLVCIVATPG…GVSRIAQGVP (96 aa)).

This sequence belongs to the RecR family.

Functionally, may play a role in DNA repair. It seems to be involved in an RecBC-independent recombinational process of DNA repair. It may act with RecF and RecO. The protein is Recombination protein RecR of Alcanivorax borkumensis (strain ATCC 700651 / DSM 11573 / NCIMB 13689 / SK2).